A 250-amino-acid chain; its full sequence is Large ribosomal subunit protein uL29m (250 aa).

A mitochondrion-targeting transit peptide spans 1-24; the sequence is MRPGAASIRTTGSVLAFLVPSAQC. A disordered region spans residues 66-86; the sequence is VLSKKGSGDQPPKPVPITEKV.

Belongs to the universal ribosomal protein uL29 family. Component of the mitochondrial large ribosomal subunit. Mature mitochondrial ribosomes consist of a small (37S) and a large (54S) subunit. The 37S subunit contains at least 33 different proteins and 1 molecule of RNA (15S). The 54S subunit contains at least 45 different proteins and 1 molecule of RNA (21S).

The protein localises to the mitochondrion. The chain is Large ribosomal subunit protein uL29m (MRPL4) from Phaeosphaeria nodorum (strain SN15 / ATCC MYA-4574 / FGSC 10173) (Glume blotch fungus).